The primary structure comprises 355 residues: Ornithine transcarbamylase, mitochondrial (355 aa).

Residues 1 to 35 constitute a mitochondrion transit peptide; the sequence is MLFINLRTLLNNAALRNGHNFVVRNFRCGQPVQDK. Position 71 is an N6-acetyllysine; alternate (lysine 71). Lysine 71 is subject to N6-succinyllysine; alternate. Lysine 81 bears the N6-succinyllysine mark. An N6-acetyllysine; alternate modification is found at lysine 89. At lysine 89 the chain carries N6-succinyllysine; alternate. 91 to 95 is a binding site for carbamoyl phosphate; it reads STRTR. Phosphoserine is present on serine 134. Arginine 142 is a binding site for carbamoyl phosphate. Arginine 142 is an L-ornithine binding site. At lysine 145 the chain carries N6-acetyllysine; alternate. Lysine 145 carries the post-translational modification N6-succinyllysine; alternate. Histidine 169 contributes to the carbamoyl phosphate binding site. Asparagine 200 contacts L-ornithine. Lysine 222, lysine 232, and lysine 239 each carry N6-acetyllysine; alternate. N6-succinyllysine; alternate occurs at positions 222, 232, and 239. At lysine 244 the chain carries N6-acetyllysine. 264–268 is an L-ornithine binding site; sequence DTWIS. An N6-succinyllysine mark is found at lysine 275 and lysine 290. Residue lysine 293 is modified to N6-acetyllysine; alternate. An N6-succinyllysine; alternate modification is found at lysine 293. An L-ornithine-binding site is contributed by 303-306; the sequence is HCLP. Cysteine 304 is a catalytic residue. Position 308 is an N6-acetyllysine; alternate (lysine 308). At lysine 308 the chain carries N6-succinyllysine; alternate. A carbamoyl phosphate-binding site is contributed by arginine 331. Arginine 331 contributes to the L-ornithine binding site.

It belongs to the aspartate/ornithine carbamoyltransferase superfamily. OTCase family. Homotrimer. Acetylation at Lys-89 negatively regulates ornithine carbamoyltransferase activity in response to nutrient signals.

It is found in the mitochondrion matrix. It carries out the reaction carbamoyl phosphate + L-ornithine = L-citrulline + phosphate + H(+). It participates in nitrogen metabolism; urea cycle; L-citrulline from L-ornithine and carbamoyl phosphate: step 1/1. With respect to regulation, negatively regulated by lysine acetylation. Catalyzes the second step of the urea cycle, the condensation of carbamoyl phosphate with L-ornithine to form L-citrulline. The urea cycle ensures the detoxification of ammonia by converting it to urea for excretion. This chain is Ornithine transcarbamylase, mitochondrial, found in Ovis aries (Sheep).